Consider the following 447-residue polypeptide: MNHRYLPMTTDDRQEMLQAIGVDSIEELFSDIPQDIRFKGKLNIPNALKEPELIRYFQQLANENVHLKDKASFLGAGVYDHYIPSIVDHVISRSEFYTAYTPYQPEISQGELQAIFEFQTMICELTGMEVANSSMYDGPTALAEAAMMSCGHTKKKKILVSKAVHPEARDVLMTNAYGQRLEVVEIDTNNGVTDVEHLKALYDEETACVIVQHPNFFGRLEPLAEIESVSHQGKATFVVSSNPLALGLLKPPGAFGADVVVGDAQPFGIPTQYGGPHCGYFATTKKLMRKVPGRLVGQTTDDQGQRGFVLTLQAREQHIRREKATSNICSNQALNALAAAVAMATIGKRGVKEMALQNVQKAAYAKSQLKANGVEIVAEGPCFNEFIIKLSSPLHEVEEALLAKGFIAGYDLGKVYPELEGHMLVAVTEVRTKEEIDQFAKEVGMFA.

The protein belongs to the GcvP family. N-terminal subunit subfamily. The glycine cleavage system is composed of four proteins: P, T, L and H. In this organism, the P 'protein' is a heterodimer of two subunits.

The enzyme catalyses N(6)-[(R)-lipoyl]-L-lysyl-[glycine-cleavage complex H protein] + glycine + H(+) = N(6)-[(R)-S(8)-aminomethyldihydrolipoyl]-L-lysyl-[glycine-cleavage complex H protein] + CO2. In terms of biological role, the glycine cleavage system catalyzes the degradation of glycine. The P protein binds the alpha-amino group of glycine through its pyridoxal phosphate cofactor; CO(2) is released and the remaining methylamine moiety is then transferred to the lipoamide cofactor of the H protein. The polypeptide is Probable glycine dehydrogenase (decarboxylating) subunit 1 (Halalkalibacterium halodurans (strain ATCC BAA-125 / DSM 18197 / FERM 7344 / JCM 9153 / C-125) (Bacillus halodurans)).